Reading from the N-terminus, the 512-residue chain is 2,3-bisphosphoglycerate-independent phosphoglycerate mutase (512 aa).

2 residues coordinate Mn(2+): D12 and S62. S62 functions as the Phosphoserine intermediate in the catalytic mechanism. Substrate-binding positions include H123, 154–155 (RD), R181, R187, 253–256 (RPDR), and K336. Mn(2+) is bound by residues D403, H407, D444, H445, and H462.

It belongs to the BPG-independent phosphoglycerate mutase family. As to quaternary structure, monomer. The cofactor is Mn(2+).

The enzyme catalyses (2R)-2-phosphoglycerate = (2R)-3-phosphoglycerate. It participates in carbohydrate degradation; glycolysis; pyruvate from D-glyceraldehyde 3-phosphate: step 3/5. Functionally, catalyzes the interconversion of 2-phosphoglycerate and 3-phosphoglycerate. The polypeptide is 2,3-bisphosphoglycerate-independent phosphoglycerate mutase (Aster yellows witches'-broom phytoplasma (strain AYWB)).